The sequence spans 499 residues: Increased recombination centers protein 15 (499 aa).

47 to 56 provides a ligand contact to FAD; that stretch reads DQRASLGGAY.

Belongs to the class-I pyridine nucleotide-disulfide oxidoreductase family.

It localises to the cytoplasm. The protein is Increased recombination centers protein 15 (IRC15) of Saccharomyces cerevisiae (strain ATCC 204508 / S288c) (Baker's yeast).